The following is a 297-amino-acid chain: Ribosomal RNA small subunit methyltransferase H (297 aa).

S-adenosyl-L-methionine contacts are provided by residues 37–39 (GGH), Glu-56, Phe-87, Asp-102, and His-109.

The protein belongs to the methyltransferase superfamily. RsmH family.

Its subcellular location is the cytoplasm. The catalysed reaction is cytidine(1402) in 16S rRNA + S-adenosyl-L-methionine = N(4)-methylcytidine(1402) in 16S rRNA + S-adenosyl-L-homocysteine + H(+). In terms of biological role, specifically methylates the N4 position of cytidine in position 1402 (C1402) of 16S rRNA. The chain is Ribosomal RNA small subunit methyltransferase H from Borrelia duttonii (strain Ly).